The chain runs to 149 residues: Arginine repressor (149 aa).

The protein belongs to the ArgR family.

Its subcellular location is the cytoplasm. It functions in the pathway amino-acid biosynthesis; L-arginine biosynthesis [regulation]. Its function is as follows. Regulates arginine biosynthesis genes. The polypeptide is Arginine repressor (Geobacillus thermodenitrificans (strain NG80-2)).